Reading from the N-terminus, the 162-residue chain is 2-amino-4-hydroxy-6-hydroxymethyldihydropteridine pyrophosphokinase (162 aa).

The protein belongs to the HPPK family.

The enzyme catalyses 6-hydroxymethyl-7,8-dihydropterin + ATP = (7,8-dihydropterin-6-yl)methyl diphosphate + AMP + H(+). The protein operates within cofactor biosynthesis; tetrahydrofolate biosynthesis; 2-amino-4-hydroxy-6-hydroxymethyl-7,8-dihydropteridine diphosphate from 7,8-dihydroneopterin triphosphate: step 4/4. Its function is as follows. Catalyzes the transfer of pyrophosphate from adenosine triphosphate (ATP) to 6-hydroxymethyl-7,8-dihydropterin, an enzymatic step in folate biosynthesis pathway. This Streptococcus pyogenes serotype M3 (strain ATCC BAA-595 / MGAS315) protein is 2-amino-4-hydroxy-6-hydroxymethyldihydropteridine pyrophosphokinase (folK).